We begin with the raw amino-acid sequence, 193 residues long: Segregation and condensation protein B (193 aa).

It belongs to the ScpB family. As to quaternary structure, homodimer. Homodimerization may be required to stabilize the binding of ScpA to the Smc head domains. Component of a cohesin-like complex composed of ScpA, ScpB and the Smc homodimer, in which ScpA and ScpB bind to the head domain of Smc. The presence of the three proteins is required for the association of the complex with DNA.

Its subcellular location is the cytoplasm. Its function is as follows. Participates in chromosomal partition during cell division. May act via the formation of a condensin-like complex containing Smc and ScpA that pull DNA away from mid-cell into both cell halves. This is Segregation and condensation protein B from Clostridium botulinum (strain ATCC 19397 / Type A).